A 259-amino-acid polypeptide reads, in one-letter code: Type III pantothenate kinase (259 aa).

ATP is bound at residue 9-16 (DAGNSRIK). Substrate contacts are provided by residues Tyr93 and 100-103 (GSDR). Residue Asp102 is the Proton acceptor of the active site. Thr126 serves as a coordination point for ATP. Thr190 is a substrate binding site.

This sequence belongs to the type III pantothenate kinase family. Homodimer. NH4(+) serves as cofactor. It depends on K(+) as a cofactor.

The protein localises to the cytoplasm. It carries out the reaction (R)-pantothenate + ATP = (R)-4'-phosphopantothenate + ADP + H(+). It participates in cofactor biosynthesis; coenzyme A biosynthesis; CoA from (R)-pantothenate: step 1/5. Its function is as follows. Catalyzes the phosphorylation of pantothenate (Pan), the first step in CoA biosynthesis. This Burkholderia thailandensis (strain ATCC 700388 / DSM 13276 / CCUG 48851 / CIP 106301 / E264) protein is Type III pantothenate kinase.